Consider the following 406-residue polypeptide: Cysteine desulfurase (406 aa).

Lysine 226 carries the N6-(pyridoxal phosphate)lysine modification. Residue cysteine 364 is the Cysteine persulfide intermediate of the active site.

Belongs to the class-V pyridoxal-phosphate-dependent aminotransferase family. Csd subfamily. As to quaternary structure, homodimer. Interacts with SufE and the SufBCD complex composed of SufB, SufC and SufD. The interaction with SufE is required to mediate the direct transfer of the sulfur atom from the S-sulfanylcysteine. Requires pyridoxal 5'-phosphate as cofactor.

It localises to the cytoplasm. It catalyses the reaction (sulfur carrier)-H + L-cysteine = (sulfur carrier)-SH + L-alanine. The enzyme catalyses L-selenocysteine + AH2 = hydrogenselenide + L-alanine + A + H(+). Its pathway is cofactor biosynthesis; iron-sulfur cluster biosynthesis. In terms of biological role, cysteine desulfurases mobilize the sulfur from L-cysteine to yield L-alanine, an essential step in sulfur metabolism for biosynthesis of a variety of sulfur-containing biomolecules. Component of the suf operon, which is activated and required under specific conditions such as oxidative stress and iron limitation. Acts as a potent selenocysteine lyase in vitro, that mobilizes selenium from L-selenocysteine. Selenocysteine lyase activity is however unsure in vivo. This is Cysteine desulfurase from Salmonella heidelberg (strain SL476).